The primary structure comprises 335 residues: Serine/threonine-protein kinase crk1 (335 aa).

The Protein kinase domain occupies 11-292; sequence YVKERKVGEG…AQQALEHHYF (282 aa). Residues 17-25 and lysine 40 each bind ATP; that span reads VGEGTYAVV. The active-site Proton acceptor is the aspartate 133. Phosphoserine is present on serine 162. The residue at position 165 (serine 165) is a Phosphoserine; by CAK. Phosphoserine is present on serine 318.

The protein belongs to the protein kinase superfamily. CMGC Ser/Thr protein kinase family. CDC2/CDKX subfamily. One of the nine subunits forming the core-TFIIH basal transcription factor. Interacts with mcs2 and tfb3.

The protein resides in the cytoplasm. The protein localises to the nucleus. The enzyme catalyses [DNA-directed RNA polymerase] + ATP = phospho-[DNA-directed RNA polymerase] + ADP + H(+). In terms of biological role, protein kinase essential for cell proliferation, where it is required for completion of cytokinesis. Phosphorylates the C-terminal repeat domain (CTD) of RNA polymerase II. The protein is Serine/threonine-protein kinase crk1 (crk1) of Schizosaccharomyces pombe (strain 972 / ATCC 24843) (Fission yeast).